Reading from the N-terminus, the 500-residue chain is Probable cytochrome P450 514A2 (500 aa).

Residues 4–24 (IYTIILTIIILVLIISIKDLF) traverse the membrane as a helical segment. Cys-446 contacts heme.

It belongs to the cytochrome P450 family. It depends on heme as a cofactor.

Its subcellular location is the membrane. The protein is Probable cytochrome P450 514A2 (cyp514A2) of Dictyostelium discoideum (Social amoeba).